Consider the following 1068-residue polypeptide: DNA-directed RNA polymerase subunit beta (1068 aa).

Belongs to the RNA polymerase beta chain family. As to quaternary structure, in plastids the minimal PEP RNA polymerase catalytic core is composed of four subunits: alpha, beta, beta', and beta''. When a (nuclear-encoded) sigma factor is associated with the core the holoenzyme is formed, which can initiate transcription.

Its subcellular location is the plastid. The protein resides in the chloroplast. The enzyme catalyses RNA(n) + a ribonucleoside 5'-triphosphate = RNA(n+1) + diphosphate. Functionally, DNA-dependent RNA polymerase catalyzes the transcription of DNA into RNA using the four ribonucleoside triphosphates as substrates. The sequence is that of DNA-directed RNA polymerase subunit beta from Staurastrum punctulatum (Green alga).